The following is a 2269-amino-acid chain: Anaphase-promoting complex subunit 1 (2269 aa).

Disordered regions lie at residues 305–334 (PSSN…QTIN), 379–433 (SSPP…QENS), 609–644 (NNNN…RKPL), 804–845 (KVYP…NNNN), and 1136–1197 (STAS…NSTS). 5 stretches are compositionally biased toward low complexity: residues 306 to 334 (SSNA…QTIN), 379 to 430 (SSPP…QQQQ), 609 to 638 (NNNN…NNNN), 809 to 845 (NNNN…NNNN), and 1136 to 1159 (STAS…GQSN). The segment covering 1160-1177 (GLPMNSTTNQMNSHQINN) has biased composition (polar residues). 2 PC repeats span residues 1440–1472 (AALM…PIND) and 1483–1520 (TAGM…ISKE). A disordered region spans residues 1535 to 1586 (STPSISSNRNNNDLFNNGSNNNSSSNGGGGGGGGNNNGNNSNNGNNGSSQFK). Residues 1540-1559 (SSNRNNNDLFNNGSNNNSSS) are compositionally biased toward low complexity. The span at 1560–1570 (NGGGGGGGGNN) shows a compositional bias: gly residues. Residues 1571-1583 (NGNNSNNGNNGSS) are compositionally biased toward low complexity. PC repeat units follow at residues 1605–1637 (GAII…GLNY), 1722–1756 (GAAF…RQVY), and 1792–1807 (LVMA…KILR). Low complexity predominate over residues 1960–1993 (NNNNNNNNNNNNNNNNNNNNNNNNNNNNNNNNNN). A disordered region spans residues 1960–1997 (NNNNNNNNNNNNNNNNNNNNNNNNNNNNNNNNNNKNIL).

The protein belongs to the APC1 family. The APC/C is composed of at least 13 subunits that stay tightly associated throughout the cell cycle: anapc1, anapc2, anapc3, anapc4, anapc5, anapc6, anapc7, anapc8, anapc10, anapc11, cdc20, cdc26 and cdh1.

The protein localises to the nucleus. It participates in protein modification; protein ubiquitination. In terms of biological role, component of the anaphase promoting complex/cyclosome (APC/C), a cell cycle-regulated E3 ubiquitin-protein ligase complex that controls progression through mitosis and the G1 phase of the cell cycle. The chain is Anaphase-promoting complex subunit 1 (anapc1) from Dictyostelium discoideum (Social amoeba).